The chain runs to 763 residues: Fibroblast growth factor receptor (763 aa).

A signal peptide spans 1–27; the sequence is MKEFEVKVASTAFVLVLFSLTINQILA. Residues 28–291 lie on the Extracellular side of the membrane; sequence SETSTKFRSP…ITKGIPNETN (264 aa). Positions 34 to 74 are disordered; it reads FRSPVPAPTVPDWNHLPNEGNEENVVSAPKQDGASGGQKPY. 2 Ig-like C2-type domains span residues 73–164 and 173–270; these read PYWT…YQLD and PILA…AWLS. Residues Cys-98 and Cys-148 are joined by a disulfide bond. N-linked (GlcNAc...) asparagine glycosylation is found at Asn-158, Asn-182, Asn-220, Asn-230, Asn-243, and Asn-288. A disulfide bridge links Cys-195 with Cys-254. Residues 292 to 312 traverse the membrane as a helical segment; sequence IIIYVMCGVLVILFGLAVVLV. The Cytoplasmic portion of the chain corresponds to 313 to 763; sequence LYYHCYNGKD…NEHARLRSEA (451 aa). In terms of domain architecture, Protein kinase spans 382–672; sequence ITLVERLDEG…TLVEDLDRML (291 aa). Residues 388-396 and Lys-417 each bind ATP; that span reads LDEGFFGQV. Asp-537 (proton acceptor) is an active-site residue. At Tyr-568 the chain carries Phosphotyrosine; by autocatalysis. Acidic residues predominate over residues 691-711; it reads YSESSEDESESQNSDEEDDDS. The disordered stretch occupies residues 691–742; that stretch reads YSESSEDESESQNSDEEDDDSVFERMRQIDSLSNGNIPFNEEDSSNSDPYVA.

The protein belongs to the protein kinase superfamily. Tyr protein kinase family. Fibroblast growth factor receptor subfamily.

It localises to the membrane. The catalysed reaction is L-tyrosyl-[protein] + ATP = O-phospho-L-tyrosyl-[protein] + ADP + H(+). Its function is as follows. Receptor for basic fibroblast growth factor. The sequence is that of Fibroblast growth factor receptor (FGFR) from Halocynthia roretzi (Sea squirt).